The sequence spans 416 residues: MKHKSEFLNFIQERGYLCQCTNIEGLDQLLLQNNYVVAYIGFDCTASSLHVGSLIQIMMLRHLQKFGYKPIVLLGGSTTKIGDPSGKDKARSVLPIEDINQNISGIKKALKKMVYFNDGKAGAIIVNNADWLDSIKYIDFLRDIGAHFSVNRMLSFDSAKTRLDREQNLSFLEFNYMLLQAYDFAELNKKYGCRLQIGGSDQWGNIVNGIELGKKLNLPELFGLTTPLLLSAQGKKMGKTESGTVWLDGDMLKPYDYWQYFRNIDDQDIGRFLRFFTDLPIDEIKKLESLKNQEINEAKKALATEVTKICHGDKEAELAQSSAVSVFENGDSSLLPDYTITKKQVANGISLIDLLHDIGLEPSKGAAKRLIQGNGCKVNDYTINDINYIINSKSFKDQSFIKLSAGKKRHIKVMVS.

Tyr-39 lines the L-tyrosine pocket. The 'HIGH' region signature appears at 44-53 (CTASSLHVGS). Residues Tyr-176 and Gln-180 each coordinate L-tyrosine. The 'KMSKS' region signature appears at 236 to 240 (KMGKT). Lys-239 lines the ATP pocket. One can recognise an S4 RNA-binding domain in the interval 349–415 (ISLIDLLHDI…GKKRHIKVMV (67 aa)).

This sequence belongs to the class-I aminoacyl-tRNA synthetase family. TyrS type 1 subfamily. As to quaternary structure, homodimer.

It localises to the cytoplasm. It carries out the reaction tRNA(Tyr) + L-tyrosine + ATP = L-tyrosyl-tRNA(Tyr) + AMP + diphosphate + H(+). Its function is as follows. Catalyzes the attachment of tyrosine to tRNA(Tyr) in a two-step reaction: tyrosine is first activated by ATP to form Tyr-AMP and then transferred to the acceptor end of tRNA(Tyr). The sequence is that of Tyrosine--tRNA ligase from Wolbachia sp. subsp. Brugia malayi (strain TRS).